A 386-amino-acid chain; its full sequence is S-adenosylmethionine synthase (386 aa).

H16 is an ATP binding site. D18 lines the Mg(2+) pocket. E44 is a binding site for K(+). 2 residues coordinate L-methionine: E57 and Q100. A flexible loop region spans residues 100-110; the sequence is QSRDITQGVDR. ATP contacts are provided by residues 165–167, D240, 246–247, A263, and K267; these read DAK and RK. D240 is an L-methionine binding site. Position 271 (K271) interacts with L-methionine.

Belongs to the AdoMet synthase family. In terms of assembly, homotetramer; dimer of dimers. Mg(2+) serves as cofactor. It depends on K(+) as a cofactor.

It localises to the cytoplasm. It catalyses the reaction L-methionine + ATP + H2O = S-adenosyl-L-methionine + phosphate + diphosphate. The protein operates within amino-acid biosynthesis; S-adenosyl-L-methionine biosynthesis; S-adenosyl-L-methionine from L-methionine: step 1/1. Its function is as follows. Catalyzes the formation of S-adenosylmethionine (AdoMet) from methionine and ATP. The overall synthetic reaction is composed of two sequential steps, AdoMet formation and the subsequent tripolyphosphate hydrolysis which occurs prior to release of AdoMet from the enzyme. This chain is S-adenosylmethionine synthase, found in Francisella tularensis subsp. tularensis (strain FSC 198).